A 302-amino-acid polypeptide reads, in one-letter code: MCHGKIAPKSSSEFVVTSVGHGVFLQLVILCALLGDGLASVCPLPPEPENGGYICHPRPCKDPLTAGSVIEYLCAEGYMLKGDYKYLTCKNGEWTPAMEVSCHLIEDKETHALGVPALSIVASTASSVALILLLVVLFVLLQPKLKSFHHSRREQGVSGDQVSIMVDGVQVALPSYEEAVYGSSGHCMPPADPRVQIVLSEGSAPSGRNMPREQQLQGQEACSSAGGEDEAPGHSGLCEAWGSQGSETVMVHQATTSSWVAGSGSSRPTHKDTADSENSDIQSLLSLTSEEYTDDIPLLKEA.

Positions 1–39 (MCHGKIAPKSSSEFVVTSVGHGVFLQLVILCALLGDGLA) are cleaved as a signal peptide. The Sushi domain maps to 40–104 (SVCPLPPEPE…TPAMEVSCHL (65 aa)). Disulfide bonds link C42-C89 and C74-C102. The helical transmembrane segment at 120–140 (IVASTASSVALILLLVVLFVL) threads the bilayer. 2 disordered regions span residues 202-241 (GSAP…CEAW) and 256-302 (TSSW…LKEA). Polar residues-rich tracts occupy residues 212-222 (REQQLQGQEAC), 256-267 (TSSWVAGSGSSR), and 279-290 (SDIQSLLSLTSE).

It localises to the membrane. Its function is as follows. May play a role in growth-suppressive activity and cell death. May be involved in the production of chemokine molecules in umbilical vein endothelial cells (HUVECs) cultured in THP1 monocyte LPS-induced medium. Plays a role in preventing tumor onset. The chain is Sushi domain-containing protein 6 from Mus musculus (Mouse).